A 182-amino-acid polypeptide reads, in one-letter code: ATP-dependent protease subunit HslV (182 aa).

Threonine 12 is a catalytic residue. Na(+) contacts are provided by glycine 167, cysteine 170, and threonine 173.

It belongs to the peptidase T1B family. HslV subfamily. In terms of assembly, a double ring-shaped homohexamer of HslV is capped on each side by a ring-shaped HslU homohexamer. The assembly of the HslU/HslV complex is dependent on binding of ATP.

The protein resides in the cytoplasm. It carries out the reaction ATP-dependent cleavage of peptide bonds with broad specificity.. Its activity is regulated as follows. Allosterically activated by HslU binding. Protease subunit of a proteasome-like degradation complex believed to be a general protein degrading machinery. The sequence is that of ATP-dependent protease subunit HslV from Acidiphilium cryptum (strain JF-5).